Here is a 556-residue protein sequence, read N- to C-terminus: Formate--tetrahydrofolate ligase (556 aa).

65-72 serves as a coordination point for ATP; the sequence is TPAGEGKT.

The protein belongs to the formate--tetrahydrofolate ligase family.

It catalyses the reaction (6S)-5,6,7,8-tetrahydrofolate + formate + ATP = (6R)-10-formyltetrahydrofolate + ADP + phosphate. It participates in one-carbon metabolism; tetrahydrofolate interconversion. The protein is Formate--tetrahydrofolate ligase of Clostridium acidurici (Gottschalkia acidurici).